A 646-amino-acid chain; its full sequence is bZIP transcription factor 39 (646 aa).

At 1 to 311 (MAEPALLDPT…KSKSKTKTKK (311 aa)) the chain is on the cytoplasmic side. A disordered region spans residues 25–172 (HELPLAGGGG…GGTVCEEEED (148 aa)). Over residues 43 to 53 (LDGLEFDLPGD) the composition is skewed to low complexity. Positions 59-69 (FLLRSPERDDS) are enriched in basic and acidic residues. The span at 71–98 (EGSAAGSGPTASPSSSPTTSASNSAVAN) shows a compositional bias: low complexity. Residues 103–113 (EVKHEESDEGR) are compositionally biased toward basic and acidic residues. Positions 159-172 (DSDEGGTVCEEEED) are enriched in acidic residues. One can recognise a bZIP domain in the interval 172 to 232 (DERRAARLMR…AENATLRQQL (61 aa)). Residues 174–205 (RRAARLMRNRESAQLSRQRKKRYVEELEEKVK) are basic motif. Residues 211-218 (INDLNSRI) are leucine-zipper. Residues 272–308 (LVPIPRLKPQQPVPSSKVVKKPESKKTVENKSKSKTK) are disordered. The span at 279–288 (KPQQPVPSSK) shows a compositional bias: low complexity. Basic and acidic residues predominate over residues 291-303 (KKPESKKTVENKS). A helical membrane pass occupies residues 312–332 (VASVSLLGLLLIMLVFGAFIP). Residues 333 to 646 (GFNHNFGMCG…FKSSSPHLVN (314 aa)) lie on the Lumenal side of the membrane. Residues asparagine 371, asparagine 399, asparagine 525, asparagine 530, asparagine 565, and asparagine 571 are each glycosylated (N-linked (GlcNAc...) asparagine). The tract at residues 560–585 (TGKTANNTEPFNRTSESSSKLPDSKP) is disordered. Residues 562–585 (KTANNTEPFNRTSESSSKLPDSKP) are compositionally biased toward polar residues.

This sequence belongs to the bZIP family. As to expression, highly expressed in leaf blade, and at lower levels in roots, leaf sheaths, flowers and seeds.

The protein localises to the endoplasmic reticulum membrane. It localises to the nucleus. Functionally, transcription factor involved in endoplasmic reticulum (ER) stress response. Acts as a ER stress sensor and activates the transcription factor BZIP50 and the chaperone BIP1. In Oryza sativa subsp. japonica (Rice), this protein is bZIP transcription factor 39.